Consider the following 95-residue polypeptide: Signal recognition particle 19 kDa protein (95 aa).

It belongs to the SRP19 family. As to quaternary structure, part of the signal recognition particle protein translocation system, which is composed of SRP and FtsY. Archaeal SRP consists of a 7S RNA molecule of 300 nucleotides and two protein subunits: SRP54 and SRP19.

The protein resides in the cytoplasm. Functionally, involved in targeting and insertion of nascent membrane proteins into the cytoplasmic membrane. Binds directly to 7S RNA and mediates binding of the 54 kDa subunit of the SRP. The polypeptide is Signal recognition particle 19 kDa protein (Staphylothermus marinus (strain ATCC 43588 / DSM 3639 / JCM 9404 / F1)).